A 443-amino-acid chain; its full sequence is Amino-acid acetyltransferase (443 aa).

The N-acetyltransferase domain maps to 296 to 434 (EQIRRATIND…KKLMYNYQRR (139 aa)).

It belongs to the acetyltransferase family. ArgA subfamily. Homohexamer.

It localises to the cytoplasm. The catalysed reaction is L-glutamate + acetyl-CoA = N-acetyl-L-glutamate + CoA + H(+). It participates in amino-acid biosynthesis; L-arginine biosynthesis; N(2)-acetyl-L-ornithine from L-glutamate: step 1/4. This is Amino-acid acetyltransferase from Escherichia fergusonii (strain ATCC 35469 / DSM 13698 / CCUG 18766 / IAM 14443 / JCM 21226 / LMG 7866 / NBRC 102419 / NCTC 12128 / CDC 0568-73).